The chain runs to 1587 residues: DNA topoisomerase 2 (1587 aa).

Residues 1–15 (MSDADPFDMSDDDDN) are compositionally biased toward acidic residues. The segment at 1–47 (MSDADPFDMSDDDDNSVLSHTPPKKQKKAPTTKKGGSKPLADVENES) is disordered. Residues 22 to 31 (PPKKQKKAPT) are compositionally biased toward basic residues. Residues N126, N155, 183–185 (SSN), and 196–203 (GRNGFGAK) each bind ATP. 2 interaction with DNA regions span residues 381–383 (KKK) and 381–386 (KKKNKN). Position 415 to 417 (415 to 417 (QTK)) interacts with ATP. The tract at residues 461–485 (MLKKTDGGRRSRMNNPKLTDANKAG) is disordered. The region spanning 492 to 606 (CTLILTEGDS…SLLKIPEFLI (115 aa)) is the Toprim domain. E498, D575, and D577 together coordinate Mg(2+). Residues 743–1190 (IPSVVDGLKP…SKEDIWKRDL (448 aa)) form the Topo IIA-type catalytic domain. Y833 acts as the O-(5'-phospho-DNA)-tyrosine intermediate in catalysis. The segment at 1016–1025 (KLSKTMTTTN) is interaction with DNA. Residues 1204–1587 (EARRQRKVAN…PRPRRPRRRS (384 aa)) are disordered. Over residues 1271 to 1280 (LSFLGKSSAK) the composition is skewed to low complexity. Positions 1308 to 1320 (PKSEPKADPKPKD) are enriched in basic and acidic residues. Over residues 1321–1334 (EDEDIVMEDSDIEE) the composition is skewed to acidic residues. Basic and acidic residues predominate over residues 1348–1364 (VKPESEDGQAKIAEAPK). Basic residues predominate over residues 1365–1375 (RGRAAAKPKPK). Acidic residues-rich tracts occupy residues 1379–1391 (EDEE…DDFM) and 1419–1430 (SDSDSDNGDDLL). Polar residues-rich tracts occupy residues 1441–1451 (GSTNGASTSDS) and 1466–1475 (GLKTTASKAS). Over residues 1512–1521 (DNEPEDDDDE) the composition is skewed to acidic residues. Over residues 1524–1542 (KPAAKGKAAAKGKSTAAAA) the composition is skewed to low complexity. Residues 1558-1568 (PKPPPRLPCPL) are compositionally biased toward pro residues. The span at 1571-1587 (RRTHRSNPRPRRPRRRS) shows a compositional bias: basic residues.

It belongs to the type II topoisomerase family. In terms of assembly, homodimer. Requires Mg(2+) as cofactor. It depends on Mn(2+) as a cofactor. Ca(2+) is required as a cofactor.

It localises to the nucleus. It carries out the reaction ATP-dependent breakage, passage and rejoining of double-stranded DNA.. Functionally, control of topological states of DNA by transient breakage and subsequent rejoining of DNA strands. Topoisomerase II makes double-strand breaks. The protein is DNA topoisomerase 2 (TOP2) of Penicillium chrysogenum (Penicillium notatum).